Here is a 151-residue protein sequence, read N- to C-terminus: Small ribosomal subunit protein uS9 (151 aa).

It belongs to the universal ribosomal protein uS9 family.

The protein is Small ribosomal subunit protein uS9 (rps9) of Aeropyrum pernix (strain ATCC 700893 / DSM 11879 / JCM 9820 / NBRC 100138 / K1).